The chain runs to 186 residues: ATP synthase subunit delta (186 aa).

It belongs to the ATPase delta chain family. As to quaternary structure, F-type ATPases have 2 components, F(1) - the catalytic core - and F(0) - the membrane proton channel. F(1) has five subunits: alpha(3), beta(3), gamma(1), delta(1), epsilon(1). F(0) has three main subunits: a(1), b(2) and c(10-14). The alpha and beta chains form an alternating ring which encloses part of the gamma chain. F(1) is attached to F(0) by a central stalk formed by the gamma and epsilon chains, while a peripheral stalk is formed by the delta and b chains.

It is found in the cell membrane. Its function is as follows. F(1)F(0) ATP synthase produces ATP from ADP in the presence of a proton or sodium gradient. F-type ATPases consist of two structural domains, F(1) containing the extramembraneous catalytic core and F(0) containing the membrane proton channel, linked together by a central stalk and a peripheral stalk. During catalysis, ATP synthesis in the catalytic domain of F(1) is coupled via a rotary mechanism of the central stalk subunits to proton translocation. In terms of biological role, this protein is part of the stalk that links CF(0) to CF(1). It either transmits conformational changes from CF(0) to CF(1) or is implicated in proton conduction. In Wolbachia pipientis wMel, this protein is ATP synthase subunit delta.